Here is a 529-residue protein sequence, read N- to C-terminus: Probable bifunctional tRNA threonylcarbamoyladenosine biosynthesis protein (529 aa).

The segment at 1–324 is kae1; that stretch reads MIVLGLEGTA…FRIDEVDAPW (324 aa). 3 residues coordinate Fe cation: H107, H111, and Y128. L-threonylcarbamoyladenylate contacts are provided by residues 128 to 132, D160, G173, E177, and N257; that span reads YVSGG. D285 serves as a coordination point for Fe cation. The 201-residue stretch at 329–529 folds into the Protein kinase domain; it reads SRKDYGKAGA…SAIRRRHRYV (201 aa). ATP contacts are provided by residues 335–342 and K355; that span reads KAGAESRI. Catalysis depends on D447, which acts as the Proton acceptor; for kinase activity.

It in the N-terminal section; belongs to the KAE1 / TsaD family. This sequence in the C-terminal section; belongs to the protein kinase superfamily. Tyr protein kinase family. BUD32 subfamily. As to quaternary structure, component of the KEOPS complex that consists of Kae1, Bud32, Cgi121 and Pcc1; the whole complex dimerizes. Fe(2+) serves as cofactor.

It localises to the cytoplasm. The enzyme catalyses L-seryl-[protein] + ATP = O-phospho-L-seryl-[protein] + ADP + H(+). It catalyses the reaction L-threonyl-[protein] + ATP = O-phospho-L-threonyl-[protein] + ADP + H(+). It carries out the reaction L-threonylcarbamoyladenylate + adenosine(37) in tRNA = N(6)-L-threonylcarbamoyladenosine(37) in tRNA + AMP + H(+). Functionally, required for the formation of a threonylcarbamoyl group on adenosine at position 37 (t(6)A37) in tRNAs that read codons beginning with adenine. Is a component of the KEOPS complex that is probably involved in the transfer of the threonylcarbamoyl moiety of threonylcarbamoyl-AMP (TC-AMP) to the N6 group of A37. The Kae1 domain likely plays a direct catalytic role in this reaction. The Bud32 domain probably displays kinase activity that regulates Kae1 function. The chain is Probable bifunctional tRNA threonylcarbamoyladenosine biosynthesis protein from Thermoplasma acidophilum (strain ATCC 25905 / DSM 1728 / JCM 9062 / NBRC 15155 / AMRC-C165).